The sequence spans 242 residues: 4-hydroxy-tetrahydrodipicolinate reductase (242 aa).

NAD(+) contacts are provided by residues 79–81 (ATT) and 103–106 (SANM). Catalysis depends on His-135, which acts as the Proton donor/acceptor. Residue His-136 coordinates (S)-2,3,4,5-tetrahydrodipicolinate. Lys-139 serves as the catalytic Proton donor. 145-146 (GT) lines the (S)-2,3,4,5-tetrahydrodipicolinate pocket.

The protein belongs to the DapB family.

Its subcellular location is the cytoplasm. It carries out the reaction (S)-2,3,4,5-tetrahydrodipicolinate + NAD(+) + H2O = (2S,4S)-4-hydroxy-2,3,4,5-tetrahydrodipicolinate + NADH + H(+). It catalyses the reaction (S)-2,3,4,5-tetrahydrodipicolinate + NADP(+) + H2O = (2S,4S)-4-hydroxy-2,3,4,5-tetrahydrodipicolinate + NADPH + H(+). Its pathway is amino-acid biosynthesis; L-lysine biosynthesis via DAP pathway; (S)-tetrahydrodipicolinate from L-aspartate: step 4/4. Its function is as follows. Catalyzes the conversion of 4-hydroxy-tetrahydrodipicolinate (HTPA) to tetrahydrodipicolinate. The protein is 4-hydroxy-tetrahydrodipicolinate reductase of Staphylococcus carnosus (strain TM300).